Reading from the N-terminus, the 398-residue chain is Acetate kinase (398 aa).

Asn-8 contributes to the Mg(2+) binding site. Lys-15 lines the ATP pocket. A substrate-binding site is contributed by Arg-89. The active-site Proton donor/acceptor is Asp-146. ATP is bound by residues 206 to 210, 281 to 283, and 329 to 333; these read HIGNG, DLR, and GVGEN. Glu-383 provides a ligand contact to Mg(2+).

Belongs to the acetokinase family. In terms of assembly, homodimer. The cofactor is Mg(2+). Mn(2+) is required as a cofactor.

It localises to the cytoplasm. The catalysed reaction is acetate + ATP = acetyl phosphate + ADP. It participates in metabolic intermediate biosynthesis; acetyl-CoA biosynthesis; acetyl-CoA from acetate: step 1/2. In terms of biological role, catalyzes the formation of acetyl phosphate from acetate and ATP. Can also catalyze the reverse reaction. This is Acetate kinase from Macrococcus caseolyticus (strain JCSC5402) (Macrococcoides caseolyticum).